Reading from the N-terminus, the 347-residue chain is Ribosomal RNA small subunit methyltransferase C (347 aa).

Belongs to the methyltransferase superfamily. RsmC family. Monomer.

It is found in the cytoplasm. The catalysed reaction is guanosine(1207) in 16S rRNA + S-adenosyl-L-methionine = N(2)-methylguanosine(1207) in 16S rRNA + S-adenosyl-L-homocysteine + H(+). In terms of biological role, specifically methylates the guanine in position 1207 of 16S rRNA in the 30S particle. This is Ribosomal RNA small subunit methyltransferase C from Shewanella putrefaciens (strain CN-32 / ATCC BAA-453).